The chain runs to 216 residues: Imidazole glycerol phosphate synthase subunit HisH (216 aa).

One can recognise a Glutamine amidotransferase type-1 domain in the interval 2 to 216 (RVAIIDYGSG…LISNFLRWKP (215 aa)). The Nucleophile role is filled by cysteine 88. Catalysis depends on residues histidine 196 and glutamate 198.

In terms of assembly, heterodimer of HisH and HisF.

It localises to the cytoplasm. The catalysed reaction is 5-[(5-phospho-1-deoxy-D-ribulos-1-ylimino)methylamino]-1-(5-phospho-beta-D-ribosyl)imidazole-4-carboxamide + L-glutamine = D-erythro-1-(imidazol-4-yl)glycerol 3-phosphate + 5-amino-1-(5-phospho-beta-D-ribosyl)imidazole-4-carboxamide + L-glutamate + H(+). The enzyme catalyses L-glutamine + H2O = L-glutamate + NH4(+). Its pathway is amino-acid biosynthesis; L-histidine biosynthesis; L-histidine from 5-phospho-alpha-D-ribose 1-diphosphate: step 5/9. Functionally, IGPS catalyzes the conversion of PRFAR and glutamine to IGP, AICAR and glutamate. The HisH subunit catalyzes the hydrolysis of glutamine to glutamate and ammonia as part of the synthesis of IGP and AICAR. The resulting ammonia molecule is channeled to the active site of HisF. The sequence is that of Imidazole glycerol phosphate synthase subunit HisH from Rhizobium meliloti (strain 1021) (Ensifer meliloti).